The following is a 404-amino-acid chain: Nesprin-4 (404 aa).

Disordered regions lie at residues 1 to 91 and 277 to 347; these read MALS…GGKH and GQRG…GAPD. At 1–355 the chain is on the cytoplasmic side; that stretch reads MALSLPLGPR…PDPASRQPLT (355 aa). Positions 39 to 52 are enriched in polar residues; it reads EESTSPEQAQTLGQ. Residues 307 to 320 are compositionally biased toward basic residues; the sequence is HQKRLARHQRHSLL. The KASH domain maps to 347–404; the sequence is DPASRQPLTFLLILFLLFLLLVGAMFLLPASGGPCCSHARIPRTPYLVLSYVNGLPPV. Residues 356 to 376 form a helical; Anchor for type IV membrane protein membrane-spanning segment; sequence FLLILFLLFLLLVGAMFLLPA. Topologically, residues 377–404 are perinuclear space; the sequence is SGGPCCSHARIPRTPYLVLSYVNGLPPV.

The protein belongs to the nesprin family. As to quaternary structure, core component of LINC complexes which are composed of inner nuclear membrane SUN domain-containing proteins coupled to outer nuclear membrane KASH domain-containing nesprins. SUN and KASH domain-containing proteins seem to bind each other promiscuously; however, differentially expression of LINC complex constituents can give rise to specific assemblies. Probably part of a SUN1-containing LINC complex. Interacts with kinesins KIF5B and KLC1. Post-translationally, the disulfid bond with SUN1 or SUN2 is required for stability of the respective LINC complex under tensile forces.

It localises to the nucleus outer membrane. In terms of biological role, as a component of the LINC (LInker of Nucleoskeleton and Cytoskeleton) complex, involved in the connection between the nuclear lamina and the cytoskeleton. The nucleocytoplasmic interactions established by the LINC complex play an important role in the transmission of mechanical forces across the nuclear envelope and in nuclear movement and positioning. Behaves as a kinesin cargo, providing a functional binding site for kinesin-1 at the nuclear envelope. Hence may contribute to the establishment of secretory epithelial morphology by promoting kinesin-dependent apical migration of the centrosome and Golgi apparatus and basal localization of the nucleus. The protein is Nesprin-4 (SYNE4) of Homo sapiens (Human).